The chain runs to 364 residues: tRNA 2-selenouridine synthase (364 aa).

The Rhodanese domain occupies Leu-14–Ile-137. The active-site S-selanylcysteine intermediate is Cys-97.

This sequence belongs to the SelU family. Monomer.

It catalyses the reaction 5-methylaminomethyl-2-thiouridine(34) in tRNA + selenophosphate + (2E)-geranyl diphosphate + H2O + H(+) = 5-methylaminomethyl-2-selenouridine(34) in tRNA + (2E)-thiogeraniol + phosphate + diphosphate. It carries out the reaction 5-methylaminomethyl-2-thiouridine(34) in tRNA + (2E)-geranyl diphosphate = 5-methylaminomethyl-S-(2E)-geranyl-thiouridine(34) in tRNA + diphosphate. The catalysed reaction is 5-methylaminomethyl-S-(2E)-geranyl-thiouridine(34) in tRNA + selenophosphate + H(+) = 5-methylaminomethyl-2-(Se-phospho)selenouridine(34) in tRNA + (2E)-thiogeraniol. The enzyme catalyses 5-methylaminomethyl-2-(Se-phospho)selenouridine(34) in tRNA + H2O = 5-methylaminomethyl-2-selenouridine(34) in tRNA + phosphate. Involved in the post-transcriptional modification of the uridine at the wobble position (U34) of tRNA(Lys), tRNA(Glu) and tRNA(Gln). Catalyzes the conversion of 2-thiouridine (S2U-RNA) to 2-selenouridine (Se2U-RNA). Acts in a two-step process involving geranylation of 2-thiouridine (S2U) to S-geranyl-2-thiouridine (geS2U) and subsequent selenation of the latter derivative to 2-selenouridine (Se2U) in the tRNA chain. The chain is tRNA 2-selenouridine synthase from Escherichia coli (strain K12 / MC4100 / BW2952).